A 133-amino-acid polypeptide reads, in one-letter code: S-adenosylmethionine decarboxylase proenzyme (133 aa).

The Schiff-base intermediate with substrate; via pyruvic acid role is filled by Ser65. Residue Ser65 is modified to Pyruvic acid (Ser); by autocatalysis. Catalysis depends on His70, which acts as the Proton acceptor; for processing activity. The active-site Proton donor; for catalytic activity is the Cys85.

Belongs to the prokaryotic AdoMetDC family. Type 1 subfamily. Heterotetramer of two alpha and two beta chains arranged as a dimer of alpha/beta heterodimers. It depends on pyruvate as a cofactor. Post-translationally, is synthesized initially as an inactive proenzyme. Formation of the active enzyme involves a self-maturation process in which the active site pyruvoyl group is generated from an internal serine residue via an autocatalytic post-translational modification. Two non-identical subunits are generated from the proenzyme in this reaction, and the pyruvate is formed at the N-terminus of the alpha chain, which is derived from the carboxyl end of the proenzyme. The post-translation cleavage follows an unusual pathway, termed non-hydrolytic serinolysis, in which the side chain hydroxyl group of the serine supplies its oxygen atom to form the C-terminus of the beta chain, while the remainder of the serine residue undergoes an oxidative deamination to produce ammonia and the pyruvoyl group blocking the N-terminus of the alpha chain.

It catalyses the reaction S-adenosyl-L-methionine + H(+) = S-adenosyl 3-(methylsulfanyl)propylamine + CO2. It functions in the pathway amine and polyamine biosynthesis; S-adenosylmethioninamine biosynthesis; S-adenosylmethioninamine from S-adenosyl-L-methionine: step 1/1. Catalyzes the decarboxylation of S-adenosylmethionine to S-adenosylmethioninamine (dcAdoMet), the propylamine donor required for the synthesis of the polyamines spermine and spermidine from the diamine putrescine. This is S-adenosylmethionine decarboxylase proenzyme from Brevibacillus brevis (strain 47 / JCM 6285 / NBRC 100599).